We begin with the raw amino-acid sequence, 403 residues long: Soluble calcium-activated nucleotidase 1 (403 aa).

Residues 1–44 (MPIQPFDQREWNEPMHSLRISVGGLPVLASMTKATDPRFRPRWR) are Cytoplasmic-facing. A helical; Signal-anchor for type II membrane protein membrane pass occupies residues 45–61 (VILTSFVGAALLWLLYS). Residues 62–403 (HHQGPVPGRP…TVKYEGIEFI (342 aa)) are Lumenal-facing. Asparagine 90 carries an N-linked (GlcNAc...) asparagine glycan. 6 residues coordinate Ca(2+): serine 170, aspartate 171, glutamate 217, glutamate 286, serine 347, and glutamate 398.

The protein belongs to the apyrase family. Monomer. Homodimer; dimerization is Ca(2+)-dependent. The cofactor is Ca(2+).

The protein localises to the endoplasmic reticulum membrane. It is found in the golgi apparatus. It localises to the golgi stack membrane. The catalysed reaction is a ribonucleoside 5'-diphosphate + H2O = a ribonucleoside 5'-phosphate + phosphate + H(+). Its function is as follows. Calcium-dependent nucleotidase with a preference for UDP. The order of activity with different substrates is UDP &gt; GDP &gt; IDP &gt;&gt; UTP &gt; CDP = GTP = ITP. Has very low activity towards ADP and even lower activity towards ATP. Does not hydrolyze AMP and GMP. Involved in proteoglycan synthesis. This is Soluble calcium-activated nucleotidase 1 (Cant1) from Mus musculus (Mouse).